We begin with the raw amino-acid sequence, 82 residues long: MMAKLMITVMMVLLLSLQQGADGRSERWRKNQMAASSIMRNLITARGDPPRFCRDELCSGDGDCSVWCTAGCNHDMGKCDTL.

A signal peptide spans 1–23; it reads MMAKLMITVMMVLLLSLQQGADG. Residues 24–46 constitute a propeptide that is removed on maturation; the sequence is RSERWRKNQMAASSIMRNLITAR. Residues P49 and P50 each carry the 4-hydroxyproline modification. Intrachain disulfides connect C53–C68, C58–C72, and C64–C79. Position 56 is a 4-carboxyglutamate (E56).

Belongs to the Pg turripeptide superfamily. In terms of tissue distribution, expressed by the venom duct.

The protein localises to the secreted. The protein is Turripeptide Gsp9.2 of Gemmula speciosa (Splendid gem-turris).